A 195-amino-acid polypeptide reads, in one-letter code: Calcineurin B homologous protein 1 (195 aa).

Glycine 2 carries N-myristoyl glycine lipidation. Residues 2-6 carry the Necessary for association with microtubule and interaction with GAPDH motif; sequence GSRAS. EF-hand domains follow at residues 26 to 61, 66 to 101, 110 to 145, and 151 to 186; these read SQIT…AINP, IINA…KSKD, SRSN…MVGV, and QLGS…VDVE. Residues aspartate 123, aspartate 125, aspartate 127, lysine 129, and glutamate 134 each coordinate Ca(2+). The short motif at 138–147 is the Nuclear export signal 1 element; that stretch reads VLRMMVGVNI. The Ca(2+) site is built by aspartate 164, aspartate 166, aspartate 168, and glutamate 175. Positions 176 to 185 match the Nuclear export signal 2 motif; that stretch reads FVKVLEKVDV.

This sequence belongs to the calcineurin regulatory subunit family. CHP subfamily. Monomer. Interacts with STK17B; the interaction occurs in a calcium-independent manner and induces the translocation of CHP1 from the Golgi to the nucleus. Interacts with GAPDH; the interaction is direct, occurs in a N-myristoylation-dependent manner and facilitates the ability of CHP1 to bind microtubules. Interacts with KIF1B (via the C-terminal end of the kinesin-motor domain); the interaction occurs in a calcium-dependent manner. Associates (via C-terminal domain) with microtubules; the association occurs with polymerized microtubules during the cell cycle in a myristoylation- and calcium-independent manner and is enhanced by GAPDH. Interacts with PPP3CA. Interacts with SLC9A1/NHE1 (via the cytoplasmic C-terminal domain); the interaction occurs at the plasma membrane in a calcium-dependent manner and at a domain that is critical for growth factor stimulation of the exchanger. Interacts with SLC9A3; increases SLC9A3 trafficking and activity at the plasma membrane. Phosphorylated; decreased phosphorylation is associated with an increase in SLC9A1/NHE1 Na(+)/H(+) exchange activity. Phosphorylation occurs in serum-dependent manner. The phosphorylation state may regulate the binding to SLC9A1/NHE1. Post-translationally, both N-myristoylation and calcium-mediated conformational changes are essential for its function in exocytic traffic. N-myristoylation is required for its association with microtubules and interaction with GAPDH, but not for the constitutive association to membranes.

The protein resides in the nucleus. It localises to the cytoplasm. It is found in the cytoskeleton. The protein localises to the endomembrane system. Its subcellular location is the endoplasmic reticulum-Golgi intermediate compartment. The protein resides in the endoplasmic reticulum. It localises to the cell membrane. It is found in the membrane. In terms of biological role, calcium-binding protein involved in different processes such as regulation of vesicular trafficking, plasma membrane Na(+)/H(+) exchanger and gene transcription. Involved in the constitutive exocytic membrane traffic. Mediates the association between microtubules and membrane-bound organelles of the endoplasmic reticulum and Golgi apparatus and is also required for the targeting and fusion of transcytotic vesicles (TCV) with the plasma membrane. Functions as an integral cofactor in cell pH regulation by controlling plasma membrane-type Na(+)/H(+) exchange activity. Affects the pH sensitivity of SLC9A1/NHE1 by increasing its sensitivity at acidic pH. Required for the stabilization and localization of SLC9A1/NHE1 at the plasma membrane. Inhibits serum- and GTPase-stimulated Na(+)/H(+) exchange. Plays a role as an inhibitor of ribosomal RNA transcription by repressing the nucleolar UBF1 transcriptional activity. May sequester UBF1 in the nucleoplasm and limit its translocation to the nucleolus. Associates to the ribosomal gene promoter. Acts as a negative regulator of the calcineurin/NFAT signaling pathway. Inhibits NFAT nuclear translocation and transcriptional activity by suppressing the calcium-dependent calcineurin phosphatase activity. Also negatively regulates the kinase activity of the apoptosis-induced kinase STK17B. Inhibits both STK17B auto- and substrate-phosphorylations in a calcium-dependent manner. The chain is Calcineurin B homologous protein 1 (CHP1) from Bos taurus (Bovine).